Reading from the N-terminus, the 372-residue chain is Queuine tRNA-ribosyltransferase (372 aa).

Asp-89 acts as the Proton acceptor in catalysis. Residues 89–93 (DSGGF), Asp-161, and Gly-232 contribute to the substrate site. The tract at residues 262–268 (GIGDLPS) is RNA binding. Asp-281 functions as the Nucleophile in the catalytic mechanism. Residues 286–290 (TKAAR) form an RNA binding; important for wobble base 34 recognition region. Positions 319, 321, 324, and 351 each coordinate Zn(2+).

It belongs to the queuine tRNA-ribosyltransferase family. As to quaternary structure, homodimer. Within each dimer, one monomer is responsible for RNA recognition and catalysis, while the other monomer binds to the replacement base PreQ1. It depends on Zn(2+) as a cofactor.

The catalysed reaction is 7-aminomethyl-7-carbaguanine + guanosine(34) in tRNA = 7-aminomethyl-7-carbaguanosine(34) in tRNA + guanine. Its pathway is tRNA modification; tRNA-queuosine biosynthesis. Catalyzes the base-exchange of a guanine (G) residue with the queuine precursor 7-aminomethyl-7-deazaguanine (PreQ1) at position 34 (anticodon wobble position) in tRNAs with GU(N) anticodons (tRNA-Asp, -Asn, -His and -Tyr). Catalysis occurs through a double-displacement mechanism. The nucleophile active site attacks the C1' of nucleotide 34 to detach the guanine base from the RNA, forming a covalent enzyme-RNA intermediate. The proton acceptor active site deprotonates the incoming PreQ1, allowing a nucleophilic attack on the C1' of the ribose to form the product. After dissociation, two additional enzymatic reactions on the tRNA convert PreQ1 to queuine (Q), resulting in the hypermodified nucleoside queuosine (7-(((4,5-cis-dihydroxy-2-cyclopenten-1-yl)amino)methyl)-7-deazaguanosine). This is Queuine tRNA-ribosyltransferase from Chlamydia felis (strain Fe/C-56) (Chlamydophila felis).